A 365-amino-acid polypeptide reads, in one-letter code: Myocyte-specific enhancer factor 2B (365 aa).

Residues 3–57 (RKKIQISRILDQRNRQVTFTKRKFGLMKKAYELSVLCDCEIALIIFNSANRLFQY) enclose the MADS-box domain. Positions 58–86 (ASTDMDRVLLKYTEYSEPHESRTNTDILE) form a DNA-binding region, mef2-type. Disordered regions lie at residues 94-124 (GLDGPELEPDEGPEEPGEKFRRLAGEGGDPA), 142-309 (VVYG…SPGP), and 321-365 (AGCP…KTQQ). Acidic residues predominate over residues 98–108 (PELEPDEGPEE). The segment covering 223–240 (NTSRSLYSGLQNPCSTAT) has biased composition (polar residues). Composition is skewed to low complexity over residues 277–289 (PQSASSLSASLRP) and 326–346 (PTAGPGRRSPGGTSPERSPGT). The segment covering 354-365 (TSLQASSEKTQQ) has biased composition (polar residues).

The protein belongs to the MEF2 family. In terms of assembly, interacts with HDAC7. Heterodimer. Interacts with HDAC9. In terms of tissue distribution, expressed in skeletal and cardiac muscle and brain.

Its subcellular location is the nucleus. In terms of biological role, transcriptional activator which binds specifically to the MEF2 element, 5'-YTA[AT](4)TAR-3', found in numerous muscle-specific genes. Activates transcription via this element. May be involved in muscle-specific and/or growth factor-related transcription. The protein is Myocyte-specific enhancer factor 2B (MEF2B) of Homo sapiens (Human).